A 542-amino-acid chain; its full sequence is 3-(3-hydroxy-phenyl)propionate/3-hydroxycinnamic acid hydroxylase (542 aa).

Residues 10 to 39 and 278 to 288 each bind FAD; these read SVAIVGAGPNGAAMANLLGLYGVDTIVVER and FVAGRVALIGD.

It belongs to the PheA/TfdB FAD monooxygenase family. Requires FAD as cofactor.

It carries out the reaction 3-(3-hydroxyphenyl)propanoate + NADH + O2 + H(+) = 3-(2,3-dihydroxyphenyl)propanoate + NAD(+) + H2O. The enzyme catalyses (2E)-3-(3-hydroxyphenyl)prop-2-enoate + NADH + O2 + H(+) = (2E)-3-(2,3-dihydroxyphenyl)prop-2-enoate + NAD(+) + H2O. It participates in aromatic compound metabolism; 3-phenylpropanoate degradation. Functionally, catalyzes the insertion of one atom of molecular oxygen into position 2 of the phenyl ring of 3-(3-hydroxyphenyl)propionate (3-HPP) and hydroxycinnamic acid (3HCI). This Burkholderia cenocepacia (strain HI2424) protein is 3-(3-hydroxy-phenyl)propionate/3-hydroxycinnamic acid hydroxylase.